The primary structure comprises 391 residues: Anhydro-N-acetylmuramic acid kinase (391 aa).

ATP is bound at residue 9–16 (GTSVDGID).

This sequence belongs to the anhydro-N-acetylmuramic acid kinase family.

The catalysed reaction is 1,6-anhydro-N-acetyl-beta-muramate + ATP + H2O = N-acetyl-D-muramate 6-phosphate + ADP + H(+). The protein operates within amino-sugar metabolism; 1,6-anhydro-N-acetylmuramate degradation. It functions in the pathway cell wall biogenesis; peptidoglycan recycling. Functionally, catalyzes the specific phosphorylation of 1,6-anhydro-N-acetylmuramic acid (anhMurNAc) with the simultaneous cleavage of the 1,6-anhydro ring, generating MurNAc-6-P. Is required for the utilization of anhMurNAc either imported from the medium or derived from its own cell wall murein, and thus plays a role in cell wall recycling. The polypeptide is Anhydro-N-acetylmuramic acid kinase (Gloeothece citriformis (strain PCC 7424) (Cyanothece sp. (strain PCC 7424))).